The primary structure comprises 586 residues: Clathrin heavy chain linker domain-containing protein 1 (586 aa).

Positions 174–232 (MNLDALTKYMKHLEDKYAEIKQAMLIKYVPAQRKADLDEEMIVLLKRRDVAENLNKKLQ) form a coiled coil.

In Homo sapiens (Human), this protein is Clathrin heavy chain linker domain-containing protein 1 (CLHC1).